The following is a 496-amino-acid chain: Probable E3 ubiquitin-protein ligase ARI12 (496 aa).

A TRIAD supradomain region spans residues 110-319; the sequence is NEYFCGACGE…GDLHFCTFDA (210 aa). The Zn(2+) site is built by C114, C117, C131, H133, C136, C139, C162, C172, C240, C243, H248, C253, C267, C270, C286, and C289. The RING-type 1 zinc finger occupies 114-172; that stretch reads CGACGESHPHKNLASVSCGHRICTRCWTSHINKIISEKPAAEWNLWLKCPVRVGLHASC. The IBR-type zinc-finger motif lies at 191-253; sequence FNYNQYLLRS…REDAHSPVDC (63 aa). The RING-type 2; atypical zinc-finger motif lies at 267–297; sequence CPKCKLRIPRNQDNSLKMKCLPCNYVFCWFC.

It belongs to the RBR family. Ariadne subfamily. Zn(2+) is required as a cofactor. Preferentially expressed in roots.

The catalysed reaction is [E2 ubiquitin-conjugating enzyme]-S-ubiquitinyl-L-cysteine + [acceptor protein]-L-lysine = [E2 ubiquitin-conjugating enzyme]-L-cysteine + [acceptor protein]-N(6)-ubiquitinyl-L-lysine.. It functions in the pathway protein modification; protein ubiquitination. Functionally, might act as an E3 ubiquitin-protein ligase, or as part of E3 complex, which accepts ubiquitin from specific E2 ubiquitin-conjugating enzymes and then transfers it to substrates. This chain is Probable E3 ubiquitin-protein ligase ARI12 (ARI12), found in Arabidopsis thaliana (Mouse-ear cress).